The sequence spans 165 residues: Small ribosomal subunit protein bS16 (165 aa).

It belongs to the bacterial ribosomal protein bS16 family.

In Azobacteroides pseudotrichonymphae genomovar. CFP2, this protein is Small ribosomal subunit protein bS16.